Here is a 216-residue protein sequence, read N- to C-terminus: Probable csgAB operon transcriptional regulatory protein (216 aa).

An HTH luxR-type domain is found at 149–214 (NSTESALLTH…QAVSWANDNL (66 aa)). Residues 173-192 (NNEIARSLFISENTVKTHLY) constitute a DNA-binding region (H-T-H motif).

Its function is as follows. The master regulator for adhesive curli fimbriae expression; necessary for transcription of the csgAB operon. Plays a positive role in biofilm formation. This chain is Probable csgAB operon transcriptional regulatory protein, found in Salmonella typhimurium (strain LT2 / SGSC1412 / ATCC 700720).